A 399-amino-acid chain; its full sequence is Probable sugar efflux transporter (399 aa).

The next 12 membrane-spanning stretches (helical) occupy residues 15–35 (VVTL…PVGL), 50–70 (VGMM…PFML), 81–101 (LIGL…AWNF), 103–123 (VLVI…SITS), 136–156 (AQAL…GIPI), 168–188 (MTFL…VKLL), 209–229 (PALV…YTAY), 246–266 (FATV…ILFG), 273–293 (ASGL…LLLP), 301–321 (LMLL…GMQV), 333–353 (VAMS…ALVG), and 364–384 (SVGY…LMIF).

Belongs to the major facilitator superfamily. SotB (TC 2.A.1.2) family.

The protein localises to the cell inner membrane. Functionally, involved in the efflux of sugars. The physiological role may be the reduction of the intracellular concentration of toxic sugars or sugar metabolites. This Klebsiella pneumoniae subsp. pneumoniae (strain ATCC 700721 / MGH 78578) protein is Probable sugar efflux transporter.